The primary structure comprises 109 residues: Putative double-stranded DNA mimic protein YciU (109 aa).

It belongs to the putative dsDNA mimic protein family.

Functionally, may act as a double-stranded DNA (dsDNA) mimic. Probably regulates the activity of a dsDNA-binding protein. This is Putative double-stranded DNA mimic protein YciU from Salmonella paratyphi B (strain ATCC BAA-1250 / SPB7).